A 741-amino-acid polypeptide reads, in one-letter code: uncharacterized protein (741 aa).

5 consecutive transmembrane segments (helical) span residues 34-54 (WLLW…LLII), 76-96 (LIIP…FING), 120-140 (LAVL…FVSL), 156-176 (LSVF…LIII), and 187-207 (LLLL…AFSI). Positions 404 to 423 (EAEEKERQEKEEKEKAEKDN) are enriched in basic and acidic residues. 2 disordered regions span residues 404-473 (EAEE…FRPR) and 555-647 (QKEL…ENAK). The span at 424–439 (GNGQDSNKVNSVSTEP) shows a compositional bias: polar residues. Composition is skewed to basic and acidic residues over residues 445 to 465 (SDAD…DSSK) and 555 to 573 (QKEL…DQKS). A compositionally biased stretch (acidic residues) spans 623-643 (DNTDESEDKQSEEEEKFDEEI). 2 helical membrane passes run 655-675 (AFFN…ENGA) and 715-735 (VIIA…FFAY).

To M.pneumoniae MPN_333.

The protein localises to the cell membrane. This is an uncharacterized protein from Mycoplasma pneumoniae (strain ATCC 29342 / M129 / Subtype 1) (Mycoplasmoides pneumoniae).